Consider the following 311-residue polypeptide: Protein MGF 360-16R (311 aa).

The protein belongs to the asfivirus MGF 360 family.

In terms of biological role, plays a role in virus cell tropism, and may be required for efficient virus replication in macrophages. The polypeptide is Protein MGF 360-16R (African swine fever virus (strain Badajoz 1971 Vero-adapted) (Ba71V)).